The chain runs to 512 residues: Alanine--glyoxylate aminotransferase 2, mitochondrial (512 aa).

The N-terminal 39 residues, 1–39 (MSLAWRTLQKAFYLETSLRILQMRPSLSCASRIYVPKLT), are a transit peptide targeting the mitochondrion. The residue at position 55 (lysine 55) is an N6-acetyllysine. Position 69 is an N6-acetyllysine; alternate (lysine 69). N6-succinyllysine; alternate is present on lysine 69. An N6-acetyllysine modification is found at lysine 82. Lysine 260 is subject to N6-acetyllysine; alternate. Position 260 is an N6-succinyllysine; alternate (lysine 260). An N6-succinyllysine modification is found at lysine 302. Lysine 348 is subject to N6-(pyridoxal phosphate)lysine. Residues lysine 415 and lysine 418 each carry the N6-acetyllysine; alternate modification. Lysine 415 and lysine 418 each carry N6-succinyllysine; alternate. At lysine 452 the chain carries N6-acetyllysine.

This sequence belongs to the class-III pyridoxal-phosphate-dependent aminotransferase family. In terms of assembly, homotetramer. The cofactor is pyridoxal 5'-phosphate. As to expression, expressed in the liver, lung and kidney.

It is found in the mitochondrion. It carries out the reaction glyoxylate + L-alanine = glycine + pyruvate. The catalysed reaction is (R)-3-amino-2-methylpropanoate + pyruvate = 2-methyl-3-oxopropanoate + L-alanine. It catalyses the reaction 3-oxopropanoate + L-alanine = beta-alanine + pyruvate. The enzyme catalyses 2-oxobutanoate + L-alanine = (2S)-2-aminobutanoate + pyruvate. It carries out the reaction N(omega),N(omega)-dimethyl-L-arginine + pyruvate = 5-(3,3-dimethylguanidino)-2-oxopentanoate + L-alanine. The catalysed reaction is N(omega),N('omega)-dimethyl-L-arginine + pyruvate = 5-(3,3'-dimethylguanidino)-2-oxopentanoate + L-alanine. It catalyses the reaction N(omega),N(omega)-dimethyl-L-arginine + glyoxylate = 5-(3,3-dimethylguanidino)-2-oxopentanoate + glycine. The enzyme catalyses N(omega),N('omega)-dimethyl-L-arginine + glyoxylate = 5-(3,3'-dimethylguanidino)-2-oxopentanoate + glycine. It carries out the reaction N(omega)-methyl-L-arginine + pyruvate = 5-(3-methylguanidino)-2-oxopentanoate + L-alanine. The catalysed reaction is N(omega)-methyl-L-arginine + glyoxylate = 5-(3-methylguanidino)-2-oxopentanoate + glycine. It catalyses the reaction L-ornithine + pyruvate = 5-amino-2-oxopentanoate + L-alanine. The enzyme catalyses L-ornithine + glyoxylate = 5-amino-2-oxopentanoate + glycine. It carries out the reaction (2S)-2-aminobutanoate + glyoxylate = 2-oxobutanoate + glycine. The catalysed reaction is N(omega),N(omega)-dimethyl-L-arginine + oxaloacetate = 5-(3,3-dimethylguanidino)-2-oxopentanoate + L-aspartate. It catalyses the reaction oxaloacetate + L-alanine = L-aspartate + pyruvate. The enzyme catalyses N(omega),N(omega)-dimethyl-L-arginine + 2-oxobutanoate = 5-(3,3-dimethylguanidino)-2-oxopentanoate + (2S)-2-aminobutanoate. It carries out the reaction 2-oxopentanoate + N(omega),N(omega)-dimethyl-L-arginine = 5-(3,3-dimethylguanidino)-2-oxopentanoate + L-2-aminopentanoate. The catalysed reaction is 2-oxohexanoate + N(omega),N(omega)-dimethyl-L-arginine = L-2-aminohexanoate + 5-(3,3-dimethylguanidino)-2-oxopentanoate. With respect to regulation, inhibited by 5-fluorouracil and 6-fluorouracil. Inhibited by phenylhydrazine, hydroxylamine, l-amino-L-proline, para-chloromercuribenzoate and HgCl2. In terms of biological role, multifunctional aminotransferase with a broad substrate specificity. Catalyzes the conversion of glyoxylate to glycine using alanine as the amino donor. Catalyzes metabolism of not L- but the D-isomer of D-beta-aminoisobutyric acid to generate 2-methyl-3-oxopropanoate and alanine. Catalyzes the transfer of the amino group from beta-alanine to pyruvate to yield L-alanine and 3-oxopropanoate. Can metabolize NG-monomethyl-L-arginine (NMMA), asymmetric NG,NG-dimethyl-L-arginine (ADMA) and symmetric NG,N'G-dimethyl-L-arginine (SDMA). ADMA is a potent inhibitor of nitric-oxide (NO) synthase, and this activity provides mechanism through which the kidney regulates blood pressure. The chain is Alanine--glyoxylate aminotransferase 2, mitochondrial (Agxt2) from Rattus norvegicus (Rat).